The chain runs to 1024 residues: RNA cytidine acetyltransferase (1024 aa).

287–296 (GRGKSAALGL) is a binding site for ATP. The residue at position 426 (K426) is an N6-acetyllysine. Residue R470 coordinates ATP. The region spanning 558-753 (CLLPPVPPTQ…HSCIMLKTLA (196 aa)) is the N-acetyltransferase domain. Residues 629 to 631 (IAV) and 636 to 642 (QGMGYGS) each bind acetyl-CoA. Residues 702–1024 (PAERLDYLGV…RKDMKLKRKK (323 aa)) form a required for localization to the nucleolus and midbody region. Position 716 is a phosphothreonine (T716). An acetyl-CoA-binding site is contributed by R725. 3 positions are modified to phosphoserine: S934, S984, and S987. Residues 990–1024 (SDKKRKLETKQEPKQSKKLKKRDNNRKDMKLKRKK) form a disordered region. Residues 1005–1024 (SKKLKKRDNNRKDMKLKRKK) are compositionally biased toward basic residues.

The protein belongs to the RNA cytidine acetyltransferase family. NAT10 subfamily. As to quaternary structure, part of the small subunit (SSU) processome, composed of more than 70 proteins and the RNA chaperone small nucleolar RNA (snoRNA) U3. Interacts with THUMPD1. Interacts with SUN1 (via N-terminus). Interacts with TERT.

It is found in the nucleus. The protein localises to the nucleolus. It carries out the reaction a cytidine in 18S rRNA + acetyl-CoA + ATP + H2O = an N(4)-acetylcytidine in 18S rRNA + ADP + phosphate + CoA + H(+). The catalysed reaction is a cytidine in tRNA + acetyl-CoA + ATP + H2O = an N(4)-acetylcytidine in tRNA + ADP + phosphate + CoA + H(+). It catalyses the reaction a cytidine in mRNA + acetyl-CoA + ATP + H2O = an N(4)-acetylcytidine in mRNA + ADP + phosphate + CoA + H(+). In terms of biological role, RNA cytidine acetyltransferase that catalyzes the formation of N(4)-acetylcytidine (ac4C) modification on mRNAs, 18S rRNA and tRNAs. Catalyzes ac4C modification of a broad range of mRNAs, enhancing mRNA stability and translation. mRNA ac4C modification is frequently present within wobble cytidine sites and promotes translation efficiency. Mediates the formation of ac4C at position 1842 in 18S rRNA. May also catalyze the formation of ac4C at position 1337 in 18S rRNA. Required for early nucleolar cleavages of precursor rRNA at sites A0, A1 and A2 during 18S rRNA synthesis. Catalyzes the formation of ac4C in serine and leucine tRNAs. Requires the tRNA-binding adapter protein THUMPD1 for full tRNA acetyltransferase activity but not for 18S rRNA acetylation. In addition to RNA acetyltransferase activity, also able to acetylate lysine residues of proteins, such as histones, microtubules, p53/TP53 and MDM2, in vitro. The relevance of the protein lysine acetyltransferase activity is however unsure in vivo. Activates telomerase activity by stimulating the transcription of TERT, and may also regulate telomerase function by affecting the balance of telomerase subunit assembly, disassembly, and localization. Involved in the regulation of centrosome duplication by acetylating CENATAC during mitosis, promoting SASS6 proteasome degradation. Part of the small subunit (SSU) processome, first precursor of the small eukaryotic ribosomal subunit. During the assembly of the SSU processome in the nucleolus, many ribosome biogenesis factors, an RNA chaperone and ribosomal proteins associate with the nascent pre-rRNA and work in concert to generate RNA folding, modifications, rearrangements and cleavage as well as targeted degradation of pre-ribosomal RNA by the RNA exosome. The chain is RNA cytidine acetyltransferase from Mus musculus (Mouse).